The primary structure comprises 103 residues: Large ribosomal subunit protein uL23 (103 aa).

The protein belongs to the universal ribosomal protein uL23 family. In terms of assembly, part of the 50S ribosomal subunit. Contacts protein L29, and trigger factor when it is bound to the ribosome.

In terms of biological role, one of the early assembly proteins it binds 23S rRNA. One of the proteins that surrounds the polypeptide exit tunnel on the outside of the ribosome. Forms the main docking site for trigger factor binding to the ribosome. The chain is Large ribosomal subunit protein uL23 from Chlorobium luteolum (strain DSM 273 / BCRC 81028 / 2530) (Pelodictyon luteolum).